The primary structure comprises 304 residues: HTH-type transcriptional regulator AdmX (304 aa).

Positions 1–58 (MKLRHLEIFYTVMTCGSLSRAAESLNISQPAASKSLKNAELKLGFKLFQRVRGKLLPS) constitute an HTH lysR-type domain. Positions 18–37 (LSRAAESLNISQPAASKSLK) form a DNA-binding region, H-T-H motif.

It belongs to the LysR transcriptional regulatory family.

Its subcellular location is the cytoplasm. Its activity is regulated as follows. AdmX-mediated transcription is inhibited by indole-3-acetic and indole-3-pyruvic acids. AdmX recognizes and binds the auxin indole-3-acetic acid (IAA), which causes conformational changes in AdmX that result in the inhibition of the expression of the andrimid gene cluster and the suppression of antibiotic production. It also recognizes indole-3-pyruvic acid (IPA), an intermediate of the main IAA biosynthetic pathway in plants and plant beneficial bacteria, which also prevents andrimid synthesis, but to a much lesser extent. In terms of biological role, positively regulates the biosynthesis of andrimid, a broad-spectrum antibiotic, by activating the expression of the adm biosynthetic gene cluster. It specifically binds to a region within the adm promoter. The polypeptide is HTH-type transcriptional regulator AdmX (Serratia plymuthica).